The chain runs to 265 residues: uncharacterized protein (265 aa).

The helical transmembrane segment at 1 to 21 threads the bilayer; that stretch reads MAFNNSTIIIIIVIAFAFFLI. N-linked (GlcNAc...) asparagine; by host glycosylation is found at N74 and N142.

It localises to the host membrane. Its subcellular location is the virion. This is an uncharacterized protein from Acanthamoeba polyphaga mimivirus (APMV).